The sequence spans 429 residues: Phosphoribosylamine--glycine ligase (429 aa).

Residues 109-316 (KDFLARHNIP…LVELCLAACE (208 aa)) form the ATP-grasp domain. 135 to 196 (LREKGAPIVI…EEFLDGEEAS (62 aa)) lines the ATP pocket. The segment at 212-237 (SQDHKRVGDKDTGPNTGGMGAYSPAP) is disordered. The segment covering 213 to 223 (QDHKRVGDKDT) has biased composition (basic and acidic residues). Mg(2+) is bound by residues E286 and N288.

It belongs to the GARS family. Monomer. Mg(2+) is required as a cofactor. Requires Mn(2+) as cofactor.

It catalyses the reaction 5-phospho-beta-D-ribosylamine + glycine + ATP = N(1)-(5-phospho-beta-D-ribosyl)glycinamide + ADP + phosphate + H(+). Its pathway is purine metabolism; IMP biosynthesis via de novo pathway; N(1)-(5-phospho-D-ribosyl)glycinamide from 5-phospho-alpha-D-ribose 1-diphosphate: step 2/2. The chain is Phosphoribosylamine--glycine ligase from Escherichia coli O157:H7.